We begin with the raw amino-acid sequence, 149 residues long: MAAKVEPFWIRKTLDQLSTEEWESLCDGCGLCCLQKLEDEEDNSVYYTRIACKLLDLTTCQCSDYANRRASVPDCIQLTPGQADEFKWLPPTCGYRLVSEGKDLPLWHHLVCGDRTAVHHERISQSGRMLSENSVAEDDWEDYLIFRAG.

This sequence belongs to the UPF0260 family.

This chain is UPF0260 protein PSPPH_1551, found in Pseudomonas savastanoi pv. phaseolicola (strain 1448A / Race 6) (Pseudomonas syringae pv. phaseolicola (strain 1448A / Race 6)).